The sequence spans 195 residues: Putative C-P lyase subunit protein HtxG (195 aa).

The protein belongs to the PhnH family.

Its function is as follows. Belongs to an operon involved in hypophosphite oxidation. Exact function not known. This is Putative C-P lyase subunit protein HtxG (htxG) from Stutzerimonas stutzeri (Pseudomonas stutzeri).